The following is a 228-amino-acid chain: Small ribosomal subunit protein uS3 (228 aa).

One can recognise a KH type-2 domain in the interval 39-107 (TREYLQDKLK…PVHINIEEIR (69 aa)).

Belongs to the universal ribosomal protein uS3 family. As to quaternary structure, part of the 30S ribosomal subunit. Forms a tight complex with proteins S10 and S14.

In terms of biological role, binds the lower part of the 30S subunit head. Binds mRNA in the 70S ribosome, positioning it for translation. In Pseudomonas putida (strain ATCC 700007 / DSM 6899 / JCM 31910 / BCRC 17059 / LMG 24140 / F1), this protein is Small ribosomal subunit protein uS3.